A 307-amino-acid polypeptide reads, in one-letter code: tRNA(Met) cytidine acetate ligase (307 aa).

ATP-binding positions include 12–25, Gly-106, Asn-163, and Arg-188; that span reads VVEY…HIYQ.

The protein belongs to the TmcAL family.

It is found in the cytoplasm. It carries out the reaction cytidine(34) in elongator tRNA(Met) + acetate + ATP = N(4)-acetylcytidine(34) in elongator tRNA(Met) + AMP + diphosphate. In terms of biological role, catalyzes the formation of N(4)-acetylcytidine (ac(4)C) at the wobble position of elongator tRNA(Met), using acetate and ATP as substrates. First activates an acetate ion to form acetyladenylate (Ac-AMP) and then transfers the acetyl group to tRNA to form ac(4)C34. The sequence is that of tRNA(Met) cytidine acetate ligase from Mycoplasmopsis synoviae (strain 53) (Mycoplasma synoviae).